The chain runs to 159 residues: Ribosomal RNA large subunit methyltransferase H (159 aa).

Residues Leu76, Gly108, and 127–132 (FSKMTL) each bind S-adenosyl-L-methionine.

The protein belongs to the RNA methyltransferase RlmH family. Homodimer.

Its subcellular location is the cytoplasm. The enzyme catalyses pseudouridine(1915) in 23S rRNA + S-adenosyl-L-methionine = N(3)-methylpseudouridine(1915) in 23S rRNA + S-adenosyl-L-homocysteine + H(+). In terms of biological role, specifically methylates the pseudouridine at position 1915 (m3Psi1915) in 23S rRNA. The polypeptide is Ribosomal RNA large subunit methyltransferase H (Bacillus anthracis (strain CDC 684 / NRRL 3495)).